The following is a 444-amino-acid chain: Inward rectifier potassium channel 4 (444 aa).

Residues 1 to 55 (MHGHNRNGQAHVPRRKRRNRFVKKNGQCNVYFANLSNKSQRYMADIFTTCVDTRW) are Cytoplasmic-facing. A helical membrane pass occupies residues 56–80 (RYMLMLFSAAFLVSWLFFGLLFWCI). The Extracellular segment spans residues 81 to 119 (AFFHGDLEASPSVPAAGAPGGNGGAAPAAPKPCIMHVNG). An intramembrane region (helical; Pore-forming) is located at residues 120–131 (FLGAFLFSVETQ). The segment at residues 132–138 (TTIGYGF) is an intramembrane region (pore-forming). The short motif at 133–138 (TIGYGF) is the Selectivity filter element. Topologically, residues 139–147 (RCVTEECPL) are extracellular. The chain crosses the membrane as a helical span at residues 148 to 169 (AVIAVVVQSIVGCVIDSFMIGT). At 170–444 (IMAKMARPKK…NISYRRESAI (275 aa)) the chain is on the cytoplasmic side. The short motif at 442–444 (SAI) is the PDZ-binding element.

It belongs to the inward rectifier-type potassium channel (TC 1.A.2.1) family. KCNJ4 subfamily. In terms of assembly, homomultimeric and heteromultimeric association with KCNJ2 and KCNJ12. Interacts with DLG2 and DLG4. Associates, via its PDZ-recognition domain, with a complex containing LIN7A, LIN7B, LIN7C, DLG1, CASK and APBA1. Interacts with TAX1BP3. TAX1BP3 competes with LIN7 family members for KCNJ4 binding.

Its subcellular location is the cell membrane. The protein localises to the postsynaptic cell membrane. It localises to the cytoplasmic vesicle membrane. The enzyme catalyses K(+)(in) = K(+)(out). Its function is as follows. Inward rectifier potassium channels are characterized by a greater tendency to allow potassium to flow into the cell rather than out of it. Their voltage dependence is regulated by the concentration of extracellular potassium; as external potassium is raised, the voltage range of the channel opening shifts to more positive voltages. The inward rectification is mainly due to the blockage of outward current by internal magnesium. Can be blocked by extracellular barium and cesium. The polypeptide is Inward rectifier potassium channel 4 (KCNJ4) (Mesocricetus auratus (Golden hamster)).